Consider the following 30-residue polypeptide: U1-poneritoxin-Ng3e (30 aa).

In terms of tissue distribution, expressed by the venom gland.

Its subcellular location is the secreted. Functionally, has activity against some Gram-positive bacteria and S.cerevisiae. Has a non-hemolytic activity. The protein is U1-poneritoxin-Ng3e of Neoponera goeldii (Ponerine ant).